The following is a 775-amino-acid chain: 5-methyltetrahydropteroyltriglutamate--homocysteine methyltransferase (775 aa).

5-methyltetrahydropteroyltri-L-glutamate contacts are provided by residues 16 to 19 (REMK) and Lys-115. L-homocysteine is bound by residues 435 to 437 (IGS) and Glu-488. L-methionine-binding positions include 435 to 437 (IGS) and Glu-488. Residues 519 to 520 (RC) and Trp-565 each bind 5-methyltetrahydropteroyltri-L-glutamate. L-homocysteine is bound at residue Asp-603. Asp-603 serves as a coordination point for L-methionine. 5-methyltetrahydropteroyltri-L-glutamate is bound at residue Glu-609. Zn(2+) contacts are provided by His-645, Cys-647, and Glu-669. His-698 (proton donor) is an active-site residue. Residue Cys-730 coordinates Zn(2+).

The protein belongs to the vitamin-B12 independent methionine synthase family. Zn(2+) is required as a cofactor.

The enzyme catalyses 5-methyltetrahydropteroyltri-L-glutamate + L-homocysteine = tetrahydropteroyltri-L-glutamate + L-methionine. Its pathway is amino-acid biosynthesis; L-methionine biosynthesis via de novo pathway; L-methionine from L-homocysteine (MetE route): step 1/1. In terms of biological role, catalyzes the transfer of a methyl group from 5-methyltetrahydrofolate to homocysteine resulting in methionine formation. In Coxiella burnetii (strain CbuG_Q212) (Coxiella burnetii (strain Q212)), this protein is 5-methyltetrahydropteroyltriglutamate--homocysteine methyltransferase.